The sequence spans 469 residues: Argininosuccinate lyase (469 aa).

Belongs to the lyase 1 family. Argininosuccinate lyase subfamily.

The protein resides in the cytoplasm. The catalysed reaction is 2-(N(omega)-L-arginino)succinate = fumarate + L-arginine. It participates in amino-acid biosynthesis; L-arginine biosynthesis; L-arginine from L-ornithine and carbamoyl phosphate: step 3/3. The protein is Argininosuccinate lyase of Burkholderia mallei (strain NCTC 10247).